We begin with the raw amino-acid sequence, 884 residues long: Protein P (884 aa).

A terminal protein domain (TP) region spans residues 1-184; it reads MHPFSRLFRN…GKPYSWEHRQ (184 aa). The tract at residues 185-387 is spacer; it reads LVQHNGQQHK…YCIHHIVSSL (203 aa). The segment at 299–345 is disordered; the sequence is RNSGHTTWFSSASNSNKSRSREKAYSSNSTSKRYSPPLNYEKSDFSS. Positions 388-729 are polymerase/reverse transcriptase domain (RT); sequence DDWGPCTVTG…YEELWPVVRQ (342 aa). The 242-residue stretch at 398–639 folds into the Reverse transcriptase domain; sequence DVTIKSPRTP…NHLHFMGYVI (242 aa). Positions 470, 590, and 591 each coordinate Mg(2+).

Belongs to the hepadnaviridae P protein family.

The catalysed reaction is DNA(n) + a 2'-deoxyribonucleoside 5'-triphosphate = DNA(n+1) + diphosphate. It catalyses the reaction Endonucleolytic cleavage to 5'-phosphomonoester.. With respect to regulation, activated by host HSP70 and HSP40 in vitro to be able to bind the epsilon loop of the pgRNA. Because deletion of the RNase H region renders the protein partly chaperone-independent, the chaperones may be needed indirectly to relieve occlusion of the RNA-binding site by this domain. Inhibited by several reverse-transcriptase inhibitors: Lamivudine, Adefovir and Entecavir. In terms of biological role, multifunctional enzyme that converts the viral RNA genome into dsDNA in viral cytoplasmic capsids. This enzyme displays a DNA polymerase activity that can copy either DNA or RNA templates, and a ribonuclease H (RNase H) activity that cleaves the RNA strand of RNA-DNA heteroduplexes in a partially processive 3'- to 5'-endonucleasic mode. Neo-synthesized pregenomic RNA (pgRNA) are encapsidated together with the P protein, and reverse-transcribed inside the nucleocapsid. Initiation of reverse-transcription occurs first by binding the epsilon loop on the pgRNA genome, and is initiated by protein priming, thereby the 5'-end of (-)DNA is covalently linked to P protein. Partial (+)DNA is synthesized from the (-)DNA template and generates the relaxed circular DNA (RC-DNA) genome. After budding and infection, the RC-DNA migrates in the nucleus, and is converted into a plasmid-like covalently closed circular DNA (cccDNA). The activity of P protein does not seem to be necessary for cccDNA generation, and is presumably released from (+)DNA by host nuclear DNA repair machinery. This is Protein P from Marmota monax (Woodchuck).